Reading from the N-terminus, the 33-residue chain is MVQCVRHSVLPRLKKDAGLPFFFPLKTNTKPLN.

The protein is pyr operon leader peptide (pyrL) of Salmonella typhi.